The primary structure comprises 153 residues: UPF0756 membrane protein Lm4b_01579 (153 aa).

The next 4 membrane-spanning stretches (helical) occupy residues 6-26 (MLFL…SLII), 54-74 (WGVT…QIGF), 80-100 (SFKS…SILA), and 117-137 (LVFG…GPVI).

Belongs to the UPF0756 family.

The protein resides in the cell membrane. This chain is UPF0756 membrane protein Lm4b_01579, found in Listeria monocytogenes serotype 4b (strain CLIP80459).